Reading from the N-terminus, the 337-residue chain is Phytanoyl-CoA dioxygenase, peroxisomal (337 aa).

The N-terminal 30 residues, 1-30 (MDRNRASARLTVLLRHLGCRSAGTIIAHHT), are a transit peptide targeting the peroxisome. 2 positions are modified to N6-succinyllysine: lysine 59 and lysine 108. 2-oxoglutarate is bound by residues lysine 120, methionine 157, 175–177 (HQD), and tryptophan 193. Positions 175 and 177 each coordinate Fe cation. Position 252 is an N6-succinyllysine (lysine 252). Histidine 264 provides a ligand contact to Fe cation. Positions 266 and 275 each coordinate 2-oxoglutarate.

The protein belongs to the PhyH family. In terms of assembly, interacts with FKBP52 and PHYHIP. The cofactor is Fe cation. Requires L-ascorbate as cofactor. ATP serves as cofactor. It depends on Mg(2+) as a cofactor.

It is found in the peroxisome. The catalysed reaction is phytanoyl-CoA + 2-oxoglutarate + O2 = 2-hydroxyphytanoyl-CoA + succinate + CO2. It carries out the reaction 3-methylhexadecanoyl-CoA + 2-oxoglutarate + O2 = 2-hydroxy-3-methylhexadecanoyl-CoA + succinate + CO2. The enzyme catalyses hexadecanoyl-CoA + 2-oxoglutarate + O2 = 2-hydroxyhexadecanoyl-CoA + succinate + CO2. It catalyses the reaction octanoyl-CoA + 2-oxoglutarate + O2 = 2-hydroxyoctanoyl-CoA + succinate + CO2. The catalysed reaction is decanoyl-CoA + 2-oxoglutarate + O2 = 2-hydroxydecanoyl-CoA + succinate + CO2. It carries out the reaction 3-methylbutanoyl-CoA + 2-oxoglutarate + O2 = 2-hydroxy-3-methylbutanoyl-CoA + succinate + CO2. The enzyme catalyses heptadecanoyl-CoA + 2-oxoglutarate + O2 = 2-hydroxyheptadecanoyl-CoA + succinate + CO2. It catalyses the reaction eicosanoyl-CoA + 2-oxoglutarate + O2 = 2-hydroxyeicosanoyl-CoA + succinate + CO2. The catalysed reaction is octadecanoyl-CoA + 2-oxoglutarate + O2 = 2-hydroxyoctadecanoyl-CoA + succinate + CO2. It carries out the reaction dodecanoyl-CoA + 2-oxoglutarate + O2 = 2-hydroxydodecanoyl-CoA + succinate + CO2. The enzyme catalyses tetradecanoyl-CoA + 2-oxoglutarate + O2 = 2-hydroxytetradecanoyl-CoA + succinate + CO2. It catalyses the reaction hexanoyl-CoA + 2-oxoglutarate + O2 = 2-hydroxyhexanoyl-CoA + succinate + CO2. The catalysed reaction is butanoyl-CoA + 2-oxoglutarate + O2 = 2-hydroxybutanoyl-CoA + succinate + CO2. It carries out the reaction 3-methylnonanoyl-CoA + 2-oxoglutarate + O2 = 2-hydroxy-3-methylnonanoyl-CoA + succinate + CO2. The enzyme catalyses 3-methylundecanoyl-CoA + 2-oxoglutarate + O2 = 2-hydroxy-3-methylundecanoyl-CoA + succinate + CO2. It catalyses the reaction 3-methyldodecanoyl-CoA + 2-oxoglutarate + O2 = 2-hydroxy-3-methyldodecanoyl-CoA + succinate + CO2. Its pathway is lipid metabolism; fatty acid metabolism. Functionally, catalyzes the 2-hydroxylation of not only racemic phytanoyl-CoA and the isomers of 3-methylhexadecanoyl-CoA, but also a variety of other mono- branched 3-methylacyl-CoA esters (with a chain length of at least seven carbon atoms) and straight-chain acyl-CoA esters (with a chain length longer than four carbon atoms). Does not hydroxylate long and very long straight chain acyl-CoAs or 2-methyl-and 4-methyl-branched acyl-CoAs. The protein is Phytanoyl-CoA dioxygenase, peroxisomal (PHYH) of Bos taurus (Bovine).